The sequence spans 543 residues: Cytochrome P450 monooxygenase 205 (543 aa).

The chain crosses the membrane as a helical span at residues 9-29 (LISLGVAALAVAVWKAIVMVI). N-linked (GlcNAc...) asparagine glycans are attached at residues Asn332 and Asn434. Cys479 is a heme binding site.

Belongs to the cytochrome P450 family. Requires heme as cofactor.

It localises to the membrane. It participates in secondary metabolite biosynthesis. In terms of biological role, cytochrome P450 monooxygenase that is able to use carbazole and phenanthrene as substrates for oxidation. The protein is Cytochrome P450 monooxygenase 205 of Postia placenta (strain ATCC 44394 / Madison 698-R) (Brown rot fungus).